The following is a 100-amino-acid chain: MHLQPKDLEKLLVVVAADLARRRQQRGLKLNHPEAIAIITYELMEGARDGRSVADLMSWGSTILTVDDVQEGVADMISMVQVEATFPDGTKLVTVHDPIR.

Belongs to the urease gamma subunit family. As to quaternary structure, heterotrimer of UreA (gamma), UreB (beta) and UreC (alpha) subunits. Three heterotrimers associate to form the active enzyme.

The protein resides in the cytoplasm. The catalysed reaction is urea + 2 H2O + H(+) = hydrogencarbonate + 2 NH4(+). It functions in the pathway nitrogen metabolism; urea degradation; CO(2) and NH(3) from urea (urease route): step 1/1. In Micrococcus luteus (strain ATCC 4698 / DSM 20030 / JCM 1464 / CCM 169 / CCUG 5858 / IAM 1056 / NBRC 3333 / NCIMB 9278 / NCTC 2665 / VKM Ac-2230) (Micrococcus lysodeikticus), this protein is Urease subunit gamma.